A 67-amino-acid chain; its full sequence is DNA-directed RNA polymerase subunit omega (67 aa).

Belongs to the RNA polymerase subunit omega family. In terms of assembly, the RNAP catalytic core consists of 2 alpha, 1 beta, 1 beta' and 1 omega subunit. When a sigma factor is associated with the core the holoenzyme is formed, which can initiate transcription.

The enzyme catalyses RNA(n) + a ribonucleoside 5'-triphosphate = RNA(n+1) + diphosphate. Functionally, promotes RNA polymerase assembly. Latches the N- and C-terminal regions of the beta' subunit thereby facilitating its interaction with the beta and alpha subunits. This chain is DNA-directed RNA polymerase subunit omega, found in Legionella pneumophila (strain Paris).